The chain runs to 253 residues: Flap endonuclease Xni (253 aa).

Asp-104 serves as a coordination point for Mg(2+). A 5'-3' exonuclease domain is found at 160-250 (VAPQQLTDFW…HGNLQQLRLN (91 aa)). Leu-171, Ala-172, Pro-180, Ile-182, and Ile-185 together coordinate K(+). The interaction with DNA stretch occupies residues 184–189 (GIGAKT).

The protein belongs to the Xni family. It depends on Mg(2+) as a cofactor. K(+) is required as a cofactor.

Has flap endonuclease activity. During DNA replication, flap endonucleases cleave the 5'-overhanging flap structure that is generated by displacement synthesis when DNA polymerase encounters the 5'-end of a downstream Okazaki fragment. The protein is Flap endonuclease Xni of Edwardsiella ictaluri (strain 93-146).